The sequence spans 66 residues: Period circadian protein (66 aa).

The disordered stretch occupies residues Glu-1–Lys-66. Residues Ser-9–Thr-31 are compositionally biased toward low complexity. 4 consecutive repeat copies span residues Gly-30 to Thr-31, Gly-32 to Thr-33, Gly-35 to Thr-36, and Gly-37 to Asn-38. Residues Gly-30–Ala-53 are 4 X 2 AA tandem repeats of G-[TN]. Residues Gly-32 to Ser-51 are compositionally biased toward gly residues.

Forms a heterodimer with timeless (TIM); the complex then translocates into the nucleus. In terms of processing, phosphorylated with a circadian rhythmicity, probably by the double-time protein (dbt). Phosphorylation could be implicated in the stability of per monomer and in the formation of heterodimer per-tim.

The protein resides in the nucleus. It is found in the cytoplasm. It localises to the perinuclear region. Its function is as follows. Essential for biological clock functions. Determines the period length of circadian and ultradian rhythms; an increase in PER dosage leads to shortened circadian rhythms and a decrease leads to lengthened circadian rhythms. Essential for the circadian rhythmicity of locomotor activity, eclosion behavior, and for the rhythmic component of the male courtship song that originates in the thoracic nervous system. The biological cycle depends on the rhythmic formation and nuclear localization of the TIM-PER complex. Light induces the degradation of TIM, which promotes elimination of PER. Nuclear activity of the heterodimer coordinatively regulates PER and TIM transcription through a negative feedback loop. Behaves as a negative element in circadian transcriptional loop. Does not appear to bind DNA, suggesting indirect transcriptional inhibition. The polypeptide is Period circadian protein (per) (Drosophila saltans (Fruit fly)).